Reading from the N-terminus, the 200-residue chain is Probable GTP-binding protein EngB (200 aa).

Residues 25–199 form the EngB-type G domain; that stretch reads SGYEVAFAGR…ISLLDRWYEW (175 aa). GTP is bound by residues 33 to 40, 60 to 64, 78 to 81, 145 to 148, and 178 to 180; these read GRSNAGKS, GRTQL, DLPG, TKAD, and FSS. 2 residues coordinate Mg(2+): Ser40 and Thr62.

This sequence belongs to the TRAFAC class TrmE-Era-EngA-EngB-Septin-like GTPase superfamily. EngB GTPase family. Mg(2+) serves as cofactor.

In terms of biological role, necessary for normal cell division and for the maintenance of normal septation. This is Probable GTP-binding protein EngB from Legionella pneumophila (strain Corby).